A 92-amino-acid polypeptide reads, in one-letter code: Small ribosomal subunit protein bS18 (92 aa).

It belongs to the bacterial ribosomal protein bS18 family. As to quaternary structure, part of the 30S ribosomal subunit. Forms a tight heterodimer with protein bS6.

Its function is as follows. Binds as a heterodimer with protein bS6 to the central domain of the 16S rRNA, where it helps stabilize the platform of the 30S subunit. The chain is Small ribosomal subunit protein bS18 from Pelagibacter ubique (strain HTCC1062).